Here is a 266-residue protein sequence, read N- to C-terminus: Maltodextrose utilization protein MalA (266 aa).

Its function is as follows. Has a role in maltotetraose utilization. This Streptococcus pneumoniae (strain ATCC BAA-255 / R6) protein is Maltodextrose utilization protein MalA (malA).